We begin with the raw amino-acid sequence, 345 residues long: Annexin A9 (345 aa).

Annexin repeat units lie at residues 41-112 (FSVD…ALLQ), 113-184 (PAAQ…ALSK), 197-266 (NLEE…SLAS), and 270-341 (NTAL…ALCR).

Belongs to the annexin family. In terms of assembly, homodimer.

Its function is as follows. May act as a low affinity receptor for acetylcholine. This chain is Annexin A9 (Anxa9), found in Mus musculus (Mouse).